The following is a 131-amino-acid chain: Putative pre-16S rRNA nuclease (131 aa).

This sequence belongs to the YqgF nuclease family.

Its subcellular location is the cytoplasm. Could be a nuclease involved in processing of the 5'-end of pre-16S rRNA. This chain is Putative pre-16S rRNA nuclease, found in Bordetella petrii (strain ATCC BAA-461 / DSM 12804 / CCUG 43448).